An 83-amino-acid polypeptide reads, in one-letter code: Omega-agatoxin-Aa4b (83 aa).

Residues M1 to A20 form the signal peptide. Residues T21–R35 constitute a propeptide that is removed on maturation. Cystine bridges form between C39–C55, C47–C60, C54–C71, and C62–C69. S81 is modified (D-serine (Ser)).

It belongs to the neurotoxin 02 (plectoxin) family. 03 (omega-agtx) subfamily. In terms of processing, the toxin with D-Ser (named omega-aga IVC) is 80-90 fold more potent than that with L-Ser (omega-aga IVB) against Cav2.1/CACNA1A (P-type) channels in rat cerebellar Purkinje neurons and is more resistant to proteases. The epimerization is done by the venom peptide isomerase heterodimer. Expressed by the venom gland.

It localises to the secreted. Functionally, antagonist of voltage-gated Cav2.1/CACNA1A (P-type) calcium channels. Paralyzes insect by blocking neuromuscular transmission. The polypeptide is Omega-agatoxin-Aa4b (Agelenopsis aperta (North American funnel-web spider)).